The primary structure comprises 205 residues: MSKKRGLSVEEKRTRMMEIFFETKDVFQLKDLEKIAPKEKGITSMSVKEILQSLVDDGMVDSERIGTSNYFWAFPSKALHARKRKLETLEAQFTEVKQKKESLQQCVDKAKVGRQDTEERSKLVEELASLRHRKEELCADLEKYKECDPDVVEEIRQSNKVAKDAVNRWTDNIFAVKSWAKKKFGFEERQIDKNFGIPEDFDYID.

The stretch at 79 to 147 forms a coiled coil; that stretch reads LHARKRKLET…CADLEKYKEC (69 aa).

The protein belongs to the MND1 family.

The protein localises to the nucleus. Required for proper homologous chromosome pairing and efficient cross-over and intragenic recombination during meiosis. Stimulates both dmc1- and rad51-mediated homologous strand assimilation, which is required for the resolution of meiotic double-strand breaks. This chain is Meiotic nuclear division protein 1 homolog, found in Xenopus laevis (African clawed frog).